The following is a 355-amino-acid chain: MSGISAQLVKKLRDLTDAGMMDCKKALVEVAGDLQKAIDFLREKGLSKAAKKADRIAAEGVVALEVAPDFKSAMMVEINSETDFVAKNEGFKELVKKTLETIKTHNIHTTEELLKSPLDNKPFEEYLHSQIAVIGENILVRKIAHLKAPSSHIINGYAHSNARVGVLIAIEYNNEKNAPKVVELARNIAMHAAAMKPQVLDCKDFSLDFVKKETLALIAEIEKDNEEAKRLGKPLKNIPTFGSRIELSDEVLAHQKKAFEDELKEQGKPEKIWDKIVPGKMERFIADNTLIDQRLTLLGQFYVMDDKKTIAQVIADCSKEWDDNLKITEYVRFELGEGIEKKTENFAEEVALQMK.

Residues 82 to 85 form an involved in Mg(2+) ion dislocation from EF-Tu region; it reads TDFV.

This sequence belongs to the EF-Ts family.

It is found in the cytoplasm. Its function is as follows. Associates with the EF-Tu.GDP complex and induces the exchange of GDP to GTP. It remains bound to the aminoacyl-tRNA.EF-Tu.GTP complex up to the GTP hydrolysis stage on the ribosome. This is Elongation factor Ts (tsf) from Helicobacter pylori (strain J99 / ATCC 700824) (Campylobacter pylori J99).